The chain runs to 154 residues: 3-dehydroquinate dehydratase (154 aa).

The active-site Proton acceptor is Y23. The substrate site is built by N74, H80, and D87. H100 serves as the catalytic Proton donor. Residues 101–102 (LS) and R111 contribute to the substrate site.

This sequence belongs to the type-II 3-dehydroquinase family. Homododecamer.

The enzyme catalyses 3-dehydroquinate = 3-dehydroshikimate + H2O. The protein operates within metabolic intermediate biosynthesis; chorismate biosynthesis; chorismate from D-erythrose 4-phosphate and phosphoenolpyruvate: step 3/7. Functionally, catalyzes a trans-dehydration via an enolate intermediate. In Actinobacillus pleuropneumoniae serotype 5b (strain L20), this protein is 3-dehydroquinate dehydratase.